Consider the following 547-residue polypeptide: Chaperonin GroEL (547 aa).

ATP is bound by residues 30 to 33 (TLGP), Lys-51, 87 to 91 (DGTTT), Gly-415, and Asp-496.

Belongs to the chaperonin (HSP60) family. As to quaternary structure, forms a cylinder of 14 subunits composed of two heptameric rings stacked back-to-back. Interacts with the co-chaperonin GroES.

It localises to the cytoplasm. The catalysed reaction is ATP + H2O + a folded polypeptide = ADP + phosphate + an unfolded polypeptide.. Its function is as follows. Together with its co-chaperonin GroES, plays an essential role in assisting protein folding. The GroEL-GroES system forms a nano-cage that allows encapsulation of the non-native substrate proteins and provides a physical environment optimized to promote and accelerate protein folding. The protein is Chaperonin GroEL of Actinobacillus pleuropneumoniae serotype 7 (strain AP76).